Reading from the N-terminus, the 173-residue chain is Probable glutathione peroxidase 5 (173 aa).

G2 carries the N-myristoyl glycine lipid modification. The active site involves C46.

It belongs to the glutathione peroxidase family. As to expression, ubiquitous.

The protein localises to the cell membrane. It carries out the reaction 2 glutathione + H2O2 = glutathione disulfide + 2 H2O. Functionally, may constitute a glutathione peroxidase-like protective system against oxidative stresses. The chain is Probable glutathione peroxidase 5 (GPX5) from Arabidopsis thaliana (Mouse-ear cress).